Consider the following 983-residue polypeptide: Protein translocase subunit SecA (983 aa).

ATP contacts are provided by residues Q83, 101–105 (GEGKT), and D489. The tract at residues 948–983 (ISSEEEDNNEKTNINNNEDLERTKGEAQQTAKNPNE) is disordered. The segment covering 973-983 (EAQQTAKNPNE) has biased composition (polar residues).

It belongs to the SecA family. In terms of assembly, monomer and homodimer. Part of the essential Sec protein translocation apparatus which comprises SecA, SecYEG and auxiliary proteins SecDF. Other proteins may also be involved.

Its subcellular location is the cell membrane. It localises to the cytoplasm. The enzyme catalyses ATP + H2O + cellular proteinSide 1 = ADP + phosphate + cellular proteinSide 2.. In terms of biological role, part of the Sec protein translocase complex. Interacts with the SecYEG preprotein conducting channel. Has a central role in coupling the hydrolysis of ATP to the transfer of proteins into and across the cell membrane, serving as an ATP-driven molecular motor driving the stepwise translocation of polypeptide chains across the membrane. In Mesomycoplasma hyopneumoniae (strain J / ATCC 25934 / NCTC 10110) (Mycoplasma hyopneumoniae), this protein is Protein translocase subunit SecA.